The chain runs to 391 residues: tRNA-specific 2-thiouridylase MnmA (391 aa).

ATP is bound by residues 9-16 and Met-35; that span reads GMSGGVDS. An interaction with target base in tRNA region spans residues 95–97; the sequence is NPD. The Nucleophile role is filled by Cys-100. Cys-100 and Cys-196 are disulfide-bonded. Gly-124 provides a ligand contact to ATP. Residues 146 to 148 form an interaction with tRNA region; it reads KDQ. The active-site Cysteine persulfide intermediate is the Cys-196. The interaction with tRNA stretch occupies residues 308–309; sequence RY.

It belongs to the MnmA/TRMU family.

It localises to the cytoplasm. It carries out the reaction S-sulfanyl-L-cysteinyl-[protein] + uridine(34) in tRNA + AH2 + ATP = 2-thiouridine(34) in tRNA + L-cysteinyl-[protein] + A + AMP + diphosphate + H(+). Catalyzes the 2-thiolation of uridine at the wobble position (U34) of tRNA, leading to the formation of s(2)U34. This chain is tRNA-specific 2-thiouridylase MnmA, found in Burkholderia cenocepacia (strain HI2424).